The chain runs to 392 residues: Extracellular metalloproteinase 4 (392 aa).

Positions 1 to 9 are excised as a propeptide; that stretch reads VHSVVDYVS. N-linked (GlcNAc...) asparagine glycans are attached at residues asparagine 27 and asparagine 176. Position 193 (histidine 193) interacts with Zn(2+). Glutamate 194 is an active-site residue. Histidine 197 serves as a coordination point for Zn(2+). N-linked (GlcNAc...) asparagine glycosylation is found at asparagine 359 and asparagine 385.

The protein belongs to the peptidase M36 family. The cofactor is Zn(2+).

The protein resides in the secreted. Secreted metalloproteinase probably acting as a virulence factor. This Trichophyton violaceum protein is Extracellular metalloproteinase 4 (MEP4).